Reading from the N-terminus, the 73-residue chain is Small ribosomal subunit protein bS18 (73 aa).

Belongs to the bacterial ribosomal protein bS18 family. As to quaternary structure, part of the 30S ribosomal subunit. Forms a tight heterodimer with protein bS6.

Binds as a heterodimer with protein bS6 to the central domain of the 16S rRNA, where it helps stabilize the platform of the 30S subunit. This is Small ribosomal subunit protein bS18 from Neorickettsia sennetsu (strain ATCC VR-367 / Miyayama) (Ehrlichia sennetsu).